The chain runs to 346 residues: Holliday junction branch migration complex subunit RuvB (346 aa).

The tract at residues 2 to 183 is large ATPase domain (RuvB-L); sequence TDDRIIGAGA…FGIVQRLEFY (182 aa). ATP is bound by residues Ile-22, Arg-23, Gly-64, Lys-67, Thr-68, Thr-69, 130–132, Arg-173, Tyr-183, and Arg-220; that span reads EDF. Residue Thr-68 participates in Mg(2+) binding. The segment at 184–254 is small ATPAse domain (RuvB-S); that stretch reads SVEELTRIVR…VAQAAMKMLK (71 aa). The tract at residues 257 to 346 is head domain (RuvB-H); it reads PEGFDELDRR…DLFAEVPDVG (90 aa). The DNA site is built by Arg-293, Arg-312, and Arg-317.

The protein belongs to the RuvB family. In terms of assembly, homohexamer. Forms an RuvA(8)-RuvB(12)-Holliday junction (HJ) complex. HJ DNA is sandwiched between 2 RuvA tetramers; dsDNA enters through RuvA and exits via RuvB. An RuvB hexamer assembles on each DNA strand where it exits the tetramer. Each RuvB hexamer is contacted by two RuvA subunits (via domain III) on 2 adjacent RuvB subunits; this complex drives branch migration. In the full resolvosome a probable DNA-RuvA(4)-RuvB(12)-RuvC(2) complex forms which resolves the HJ.

The protein localises to the cytoplasm. It catalyses the reaction ATP + H2O = ADP + phosphate + H(+). In terms of biological role, the RuvA-RuvB-RuvC complex processes Holliday junction (HJ) DNA during genetic recombination and DNA repair, while the RuvA-RuvB complex plays an important role in the rescue of blocked DNA replication forks via replication fork reversal (RFR). RuvA specifically binds to HJ cruciform DNA, conferring on it an open structure. The RuvB hexamer acts as an ATP-dependent pump, pulling dsDNA into and through the RuvAB complex. RuvB forms 2 homohexamers on either side of HJ DNA bound by 1 or 2 RuvA tetramers; 4 subunits per hexamer contact DNA at a time. Coordinated motions by a converter formed by DNA-disengaged RuvB subunits stimulates ATP hydrolysis and nucleotide exchange. Immobilization of the converter enables RuvB to convert the ATP-contained energy into a lever motion, pulling 2 nucleotides of DNA out of the RuvA tetramer per ATP hydrolyzed, thus driving DNA branch migration. The RuvB motors rotate together with the DNA substrate, which together with the progressing nucleotide cycle form the mechanistic basis for DNA recombination by continuous HJ branch migration. Branch migration allows RuvC to scan DNA until it finds its consensus sequence, where it cleaves and resolves cruciform DNA. This Stenotrophomonas maltophilia (strain R551-3) protein is Holliday junction branch migration complex subunit RuvB.